The following is a 341-amino-acid chain: MITTPRYIVIEENGINLLNDILLKLNLKNPLVITGKRTKKYISNFDYFYYFDYIDIKRNEPNKEFIENICNFDCIIGVGGGKAIDVGKYIAYKYNKQFISIPTTASNDGIASPIISQQGKSITAESPIAIIADLNIIKKSPKRLLSAGMGDIVSNITAVLDWKLSYKETKEPYSESSAIFSKTIAMELVEFVLSNDKNNLEEYPKKLVKALIGSGITISIAGSTRPASGSEHLFSHSLDIITKKLNLNINGIHGEQCGIGTIISAYLHLIEGNITIGEYENIKLSLEKVGAPTIGEQLGYDKNILIDALANAHKIRNRWTILRNGISKEKAEKILKKTDII.

NAD(+) is bound by residues 81-85 and 103-106; these read GKAID and TTAS. Substrate is bound at residue Asp108. Ser112 contacts NAD(+). Asp151 lines the substrate pocket. Zn(2+)-binding residues include Asp151 and His232. Substrate is bound at residue His236. A Zn(2+)-binding site is contributed by His253.

The protein belongs to the glycerol-1-phosphate dehydrogenase family. The cofactor is Zn(2+).

It localises to the cytoplasm. The enzyme catalyses sn-glycerol 1-phosphate + NAD(+) = dihydroxyacetone phosphate + NADH + H(+). It catalyses the reaction sn-glycerol 1-phosphate + NADP(+) = dihydroxyacetone phosphate + NADPH + H(+). The protein operates within membrane lipid metabolism; glycerophospholipid metabolism. Catalyzes the NAD(P)H-dependent reduction of dihydroxyacetonephosphate (DHAP or glycerone phosphate) to glycerol 1-phosphate (G1P). The G1P thus generated is used as the glycerophosphate backbone of phospholipids in the cellular membranes of Archaea. This Methanococcus aeolicus (strain ATCC BAA-1280 / DSM 17508 / OCM 812 / Nankai-3) protein is Glycerol-1-phosphate dehydrogenase [NAD(P)+].